The sequence spans 1414 residues: Calcium-transporting ATPase 2 (1414 aa).

Disordered stretches follow at residues 1–231 (MSRN…PSRL) and 265–294 (AVGTDEGNAENGAPRSSADMPGGNGPQWRA). The Cytoplasmic segment spans residues 1 to 327 (MSRNNPPPVI…LLMWLAFKDK (327 aa)). Low complexity-rich tracts occupy residues 33–53 (PTPTLVIPGSPASESSHPESP) and 75–96 (SPTPSYSSALTPPSPTLTSSSS). The span at 179-189 (DGDRGEDDANK) shows a compositional bias: basic and acidic residues. Residues 190-201 (KGKKDKKGKKGK) show a composition bias toward basic residues. The segment covering 202–229 (KDKEEPPSAHLDPDKDKTDPTPFREKPS) has biased composition (basic and acidic residues). Residues 328-348 (VLILLSVAAVVSLALGLYQDL) traverse the membrane as a helical segment. Topologically, residues 349-370 (GTPPKIIYNDECPDGCEEAQVD) are vacuolar. A helical membrane pass occupies residues 371 to 391 (WVEGVAIVVAIIIVVLVGSIN). Residues 392–541 (DWQKERQFKK…TPLQIKLNHL (150 aa)) lie on the Cytoplasmic side of the membrane. The chain crosses the membrane as a helical span at residues 542-562 (AELIAKLGGASGLLLFIALMI). The Vacuolar portion of the chain corresponds to 563–585 (RFFVQLKTNPDRSANDKAQSFIQ). Residues 586–606 (ILIIAVTLVVVAVPEGLPLAV) traverse the membrane as a helical segment. Ca(2+)-binding residues include valine 595 and glutamate 600. At 607 to 1040 (TLALAFATKR…GRCVNDSVKK (434 aa)) the chain is on the cytoplasmic side. The active-site 4-aspartylphosphate intermediate is aspartate 642. Mg(2+) contacts are provided by aspartate 642 and threonine 644. ATP-binding positions include threonine 644, glutamate 737, arginine 779, 909–911 (TGD), arginine 958, and lysine 964. Aspartate 983 lines the Mg(2+) pocket. An ATP-binding site is contributed by asparagine 986. Residues 1041–1061 (FLQFQISVNITAVFITFISAV) traverse the membrane as a helical segment. Asparagine 1049 provides a ligand contact to Ca(2+). Residues 1062–1068 (ASSSEES) are Vacuolar-facing. A helical transmembrane segment spans residues 1069 to 1089 (VLTAVQLLWVNLIMDTFAALA). Ca(2+)-binding residues include asparagine 1079 and aspartate 1083. Topologically, residues 1090–1118 (LATDPATESSLDRKPDRKNAPLITVEMFK) are cytoplasmic. The chain crosses the membrane as a helical span at residues 1119-1139 (MIMVQAIYQIIVCLVLHFAGL). The Vacuolar portion of the chain corresponds to 1140–1153 (KILGLEDNDQNNTE). A helical membrane pass occupies residues 1154-1171 (LGALVFNCFVFCQIFNQL). The Cytoplasmic portion of the chain corresponds to 1172–1191 (NCRRLDRKLNVLEGFWRNWY). The helical transmembrane segment at 1192-1212 (FIIIFLIMVGGQILIVEVGGA) threads the bilayer. Glutamate 1208 is a binding site for Ca(2+). Over 1213 to 1223 (AFQVTRLGGRD) the chain is Vacuolar. Residues 1224 to 1244 (WGITLVIGALSLPIGALVRLT) form a helical membrane-spanning segment. The Cytoplasmic portion of the chain corresponds to 1245–1414 (PTGPFARLLV…GLSSGDANNV (170 aa)). The segment at 1376-1414 (PRTNPDDPLYAKFGLQPPESRGSSVSGAEGLSSGDANNV) is disordered.

Belongs to the cation transport ATPase (P-type) (TC 3.A.3) family.

The protein resides in the vacuole membrane. It catalyses the reaction Ca(2+)(in) + ATP + H2O = Ca(2+)(out) + ADP + phosphate + H(+). This magnesium-dependent enzyme catalyzes the hydrolysis of ATP coupled with the transport of calcium. Transports calcium to the vacuole and participates in the control of cytosolic free calcium. The chain is Calcium-transporting ATPase 2 from Cryptococcus neoformans var. grubii serotype A (strain H99 / ATCC 208821 / CBS 10515 / FGSC 9487) (Filobasidiella neoformans var. grubii).